A 201-amino-acid polypeptide reads, in one-letter code: Recombination protein RecR (201 aa).

Residues 60 to 75 (CSRCGNVDTVDPCTVC) form a C4-type zinc finger. Residues 83-178 (SVIIVVEDVS…KITRLAHGVP (96 aa)) enclose the Toprim domain.

The protein belongs to the RecR family.

In terms of biological role, may play a role in DNA repair. It seems to be involved in an RecBC-independent recombinational process of DNA repair. It may act with RecF and RecO. The protein is Recombination protein RecR of Rhizobium etli (strain CIAT 652).